Here is a 144-residue protein sequence, read N- to C-terminus: Maximins 2/H8 type 1 (144 aa).

The signal sequence occupies residues 1–18 (MNFKYIVAVSFLIASAYA). The propeptide occupies 19-43 (RSEENEIQSLSQRDVLEEESLREMR). Asparagine amide is present on Asn70. The propeptide occupies 74–123 (TAEEHEVMKRLETVMRDLDSLDYPEEASERETRGFNQEEIANLFTKKEKR). The residue at position 143 (Ile143) is an Isoleucine amide.

It belongs to the bombinin family. Expressed by the skin glands.

The protein localises to the secreted. Its function is as follows. Maximin-2 shows antibacterial activity against both Gram-positive and Gram-negative bacteria. It also shows antimicrobial activity against the fungus C.albicans, but not against A.flavus nor P.uticale. It has little hemolytic activity. In terms of biological role, maximin-H8 shows antimicrobial activity against bacteria and against the fungus C.albicans. Shows strong hemolytic activity. This Bombina maxima (Giant fire-bellied toad) protein is Maximins 2/H8 type 1.